Reading from the N-terminus, the 133-residue chain is Large ribosomal subunit protein bL19 (133 aa).

The protein belongs to the bacterial ribosomal protein bL19 family.

In terms of biological role, this protein is located at the 30S-50S ribosomal subunit interface and may play a role in the structure and function of the aminoacyl-tRNA binding site. In Stenotrophomonas maltophilia (strain K279a), this protein is Large ribosomal subunit protein bL19.